The sequence spans 571 residues: Decapping 5-like protein (571 aa).

The span at 1-17 shows a compositional bias: low complexity; it reads MASESSQSSSPSSSQPP. 4 disordered regions span residues 1-27, 102-141, 159-187, and 258-305; these read MASE…SPGN, LQVN…ISGY, LSSK…GSLT, and SQVV…SEAQ. The Sm domain maps to 25 to 108; it reads PGNNVGDTFI…IKDLQVNPSP (84 aa). Polar residues-rich tracts occupy residues 104–138 and 167–187; these read VNPS…SSPI and TQHS…GSLT. Positions 264-279 are enriched in low complexity; that stretch reads SPDVSSNQSYSSNPSP. Polar residues predominate over residues 293–305; that stretch reads SVSSNLSPPSEAQ. Residues 419 to 455 enclose the DFDF domain; it reads RIPSSSIEYTEEFDFEAMNEKFKKSELWGYLGRNNQR. Residues 474–489 carry the FFD box motif; it reads PAYNKDDFFDTISCNQ. Residues 498–518 carry the TFG box motif; that stretch reads QQHNQFPEHMRQVPEAFGNNF.

This sequence belongs to the LSM14 family. Homodimer. Component of the decapping complex.

It localises to the cytoplasm. It is found in the P-body. Functionally, as a component of the decapping complex, involved in the degradation of mRNAs. Promotes P-body formation. Translational repressor. This is Decapping 5-like protein (DCP5-L) from Arabidopsis thaliana (Mouse-ear cress).